The following is a 258-amino-acid chain: Proteasome subunit alpha type-3 (258 aa).

Glycyl lysine isopeptide (Lys-Gly) (interchain with G-Cter in ubiquitin) cross-links involve residues Lys100, Lys199, and Lys231.

It belongs to the peptidase T1A family. The 26S proteasome consists of a 20S proteasome core and two 19S regulatory subunits. The 20S proteasome core is composed of 28 subunits that are arranged in four stacked rings, resulting in a barrel-shaped structure. The two end rings are each formed by seven alpha subunits, and the two central rings are each formed by seven beta subunits. The catalytic chamber with the active sites is on the inside of the barrel.

The protein resides in the cytoplasm. It localises to the nucleus. Functionally, the proteasome degrades poly-ubiquitinated proteins in the cytoplasm and in the nucleus. It is essential for the regulated turnover of proteins and for the removal of misfolded proteins. The proteasome is a multicatalytic proteinase complex that is characterized by its ability to cleave peptides with Arg, Phe, Tyr, Leu, and Glu adjacent to the leaving group at neutral or slightly basic pH. It has an ATP-dependent proteolytic activity. In Saccharomyces cerevisiae (strain ATCC 204508 / S288c) (Baker's yeast), this protein is Proteasome subunit alpha type-3 (PRE9).